Reading from the N-terminus, the 88-residue chain is Pigment dispersing factor homolog pdf-1 (88 aa).

An N-terminal signal peptide occupies residues 1–21 (MNRFIISMIALLAVFCAVSTA).

Its subcellular location is the secreted. In terms of biological role, probable ligand of isoforms a and b of the calcitonin receptor-like protein, pdfr-1, a G-protein coupled receptor. May not signal through isoform c of pdfr-1. Involved in locomotion; more specifically mate searching behavior of males, independent of nutritional status. Involved in regulating the male-specific expression of TGFbeta-like daf-7 in the ASJ chemosensory neurons. Plays a role in circadian rhythms of locomotor activity. Involved in mediating arousal from the sleep-like state called lethargus, which occurs during molting between larval and adult stages, in part by regulating touch sensitivity, and working in concert with neuropeptide flp-2. In the presence of food, plays a role in initiating and extending exploratory roaming behavior, in opposition to 5-hydroxytryptamine (serotonin) signaling. The sequence is that of Pigment dispersing factor homolog pdf-1 from Caenorhabditis elegans.